The following is a 178-amino-acid chain: Large ribosomal subunit protein uL6 (178 aa).

Belongs to the universal ribosomal protein uL6 family. Part of the 50S ribosomal subunit.

In terms of biological role, this protein binds to the 23S rRNA, and is important in its secondary structure. It is located near the subunit interface in the base of the L7/L12 stalk, and near the tRNA binding site of the peptidyltransferase center. The chain is Large ribosomal subunit protein uL6 from Campylobacter jejuni subsp. doylei (strain ATCC BAA-1458 / RM4099 / 269.97).